The chain runs to 516 residues: Putative GTP-binding protein 6 (516 aa).

A compositionally biased stretch (low complexity) spans 18 to 39; the sequence is GRGRSAPRAAAPSCPARALAAV. The interval 18 to 82 is disordered; sequence GRGRSAPRAA…PEDADENAEE (65 aa). The segment covering 57-67 has biased composition (basic and acidic residues); it reads LRADGGRSRTG. Residues 68-82 show a composition bias toward acidic residues; sequence DDEEEPEDADENAEE. Residues 295 to 459 form the Hflx-type G domain; it reads PVISVVGYTN…ELDAAVLKAT (165 aa). Residues 301-308, 327-331, 349-352, 418-421, and 437-439 contribute to the GTP site; these read GYTNCGKT, FATLD, DTIG, NKVD, and SAL. Mg(2+) contacts are provided by T308 and T329.

The protein belongs to the TRAFAC class OBG-HflX-like GTPase superfamily. HflX GTPase family. Mg(2+) serves as cofactor. As to expression, ubiquitously expressed.

The polypeptide is Putative GTP-binding protein 6 (GTPBP6) (Homo sapiens (Human)).